The following is a 222-amino-acid chain: ATP-dependent dethiobiotin synthetase BioD (222 aa).

ATP is bound at residue 12–17 (DAGKTV). Thr16 is a Mg(2+) binding site. Lys37 is a catalytic residue. Ser41 provides a ligand contact to substrate. ATP contacts are provided by residues Asp54, 116 to 119 (EGAG), 176 to 177 (VQ), 206 to 208 (PYL), and Glu213. Mg(2+) is bound by residues Asp54 and Glu116.

This sequence belongs to the dethiobiotin synthetase family. Homodimer. It depends on Mg(2+) as a cofactor.

It localises to the cytoplasm. The enzyme catalyses (7R,8S)-7,8-diammoniononanoate + CO2 + ATP = (4R,5S)-dethiobiotin + ADP + phosphate + 3 H(+). The protein operates within cofactor biosynthesis; biotin biosynthesis; biotin from 7,8-diaminononanoate: step 1/2. Its function is as follows. Catalyzes a mechanistically unusual reaction, the ATP-dependent insertion of CO2 between the N7 and N8 nitrogen atoms of 7,8-diaminopelargonic acid (DAPA, also called 7,8-diammoniononanoate) to form a ureido ring. The polypeptide is ATP-dependent dethiobiotin synthetase BioD (Idiomarina loihiensis (strain ATCC BAA-735 / DSM 15497 / L2-TR)).